A 448-amino-acid polypeptide reads, in one-letter code: Methionine aminopeptidase 2 (448 aa).

The segment at methionine 1–aspartate 47 is disordered. Basic residues predominate over residues lysine 24–serine 34. Histidine 198 contributes to the substrate binding site. Residues aspartate 218, aspartate 229, and histidine 298 each contribute to the a divalent metal cation site. Histidine 306 provides a ligand contact to substrate. Glutamate 331 and glutamate 429 together coordinate a divalent metal cation.

It belongs to the peptidase M24A family. Methionine aminopeptidase eukaryotic type 2 subfamily. Co(2+) is required as a cofactor. Zn(2+) serves as cofactor. The cofactor is Mn(2+). Requires Fe(2+) as cofactor.

The protein localises to the cytoplasm. It catalyses the reaction Release of N-terminal amino acids, preferentially methionine, from peptides and arylamides.. Functionally, cotranslationally removes the N-terminal methionine from nascent proteins. The N-terminal methionine is often cleaved when the second residue in the primary sequence is small and uncharged (Met-Ala-, Cys, Gly, Pro, Ser, Thr, or Val). The sequence is that of Methionine aminopeptidase 2 from Komagataella phaffii (strain GS115 / ATCC 20864) (Yeast).